The sequence spans 372 residues: Glycerophosphodiester phosphodiesterase GDPD6 (372 aa).

The first 21 residues, 1–21 (MAFKYLLPLLLLSLLVANCAS), serve as a signal peptide directing secretion. Residues 32-58 (KHATKKPLQTSRPYNLAHRGSNGELPE) form a disordered region. One can recognise a GP-PDE domain in the interval 44 to 362 (PYNLAHRGSN…DFTGSLHNYQ (319 aa)). Residues Asn120, Asn239, and Asn260 are each glycosylated (N-linked (GlcNAc...) asparagine).

This sequence belongs to the glycerophosphoryl diester phosphodiesterase family. As to expression, expressed in flowers and siliques.

The enzyme catalyses a sn-glycero-3-phosphodiester + H2O = an alcohol + sn-glycerol 3-phosphate + H(+). This is Glycerophosphodiester phosphodiesterase GDPD6 from Arabidopsis thaliana (Mouse-ear cress).